We begin with the raw amino-acid sequence, 317 residues long: Aspartate carbamoyltransferase catalytic subunit (317 aa).

Carbamoyl phosphate is bound by residues R66 and T67. K94 serves as a coordination point for L-aspartate. Carbamoyl phosphate-binding residues include R116, H144, and Q147. L-aspartate-binding residues include R177 and R231. Carbamoyl phosphate contacts are provided by G272 and P273.

This sequence belongs to the aspartate/ornithine carbamoyltransferase superfamily. ATCase family. As to quaternary structure, heterododecamer (2C3:3R2) of six catalytic PyrB chains organized as two trimers (C3), and six regulatory PyrI chains organized as three dimers (R2).

The enzyme catalyses carbamoyl phosphate + L-aspartate = N-carbamoyl-L-aspartate + phosphate + H(+). It functions in the pathway pyrimidine metabolism; UMP biosynthesis via de novo pathway; (S)-dihydroorotate from bicarbonate: step 2/3. Its function is as follows. Catalyzes the condensation of carbamoyl phosphate and aspartate to form carbamoyl aspartate and inorganic phosphate, the committed step in the de novo pyrimidine nucleotide biosynthesis pathway. This is Aspartate carbamoyltransferase catalytic subunit from Nitrobacter hamburgensis (strain DSM 10229 / NCIMB 13809 / X14).